A 225-amino-acid polypeptide reads, in one-letter code: Golgi to ER traffic protein 1 (225 aa).

A topological domain (lumenal) is located at residue Met1. Residues 2–21 form a helical membrane-spanning segment; the sequence is NWVIIAALFFVIINKLLQYT. Residues 22–107 are Cytoplasmic-facing; that stretch reads SRYQEAWINK…SQSKLFNRLK (86 aa). Residues 37–104 adopt a coiled-coil conformation; it reads DISSLSKEYS…AKDSQSKLFN (68 aa). Residues 108 to 128 traverse the membrane as a helical segment; the sequence is LLTLTLPFMILKLWKGKFIVY. Topologically, residues 129 to 172 are lumenal; sequence DIPTKDTFPVIVNGVLSQGLLYIPLLPINFLRGIDPNKHILVPG. Residues 173 to 189 traverse the membrane as a helical segment; sequence VSLGIWLMALTKTIDTV. At 190–225 the chain is on the cytoplasmic side; that stretch reads EFIVKQLVFQPVVSKQVKEKTKEKVVELKTTEAELD.

This sequence belongs to the WRB/GET1 family. In terms of assembly, component of the Golgi to ER traffic (GET) complex, which is composed of GET1, GET2 and GET3. Within the complex, GET1 and GET2 form a heterotetramer which is stabilized by phosphatidylinositol binding and which binds to the GET3 homodimer.

It is found in the endoplasmic reticulum membrane. The protein localises to the golgi apparatus membrane. Required for the post-translational delivery of tail-anchored (TA) proteins to the endoplasmic reticulum. Together with GET2, acts as a membrane receptor for soluble GET3, which recognizes and selectively binds the transmembrane domain of TA proteins in the cytosol. The GET complex cooperates with the HDEL receptor ERD2 to mediate the ATP-dependent retrieval of resident ER proteins that contain a C-terminal H-D-E-L retention signal from the Golgi to the ER. This chain is Golgi to ER traffic protein 1, found in Vanderwaltozyma polyspora (strain ATCC 22028 / DSM 70294 / BCRC 21397 / CBS 2163 / NBRC 10782 / NRRL Y-8283 / UCD 57-17) (Kluyveromyces polysporus).